The primary structure comprises 412 residues: Alpha-1-antiproteinase (412 aa).

An N-terminal signal peptide occupies residues 1 to 24 (MPSSISWGLLLLAGLCCLAPGSLA). Serine 33 is modified (phosphoserine). N-linked (GlcNAc...) asparagine glycosylation is found at asparagine 65, asparagine 102, asparagine 165, and asparagine 266. The segment at 368–387 (GVTVLEAIPMSLPPDVRFDR) is RCL. Serine 378 is modified (phosphoserine).

This sequence belongs to the serpin family. As to quaternary structure, interacts with CELA2A. Interacts with ERGIC3 and LMAN1/ERGIC53. Interacts with PRSS1/Trypsin. As to expression, plasma.

It localises to the secreted. In terms of biological role, inhibitor of serine proteases. The polypeptide is Alpha-1-antiproteinase (Callosciurus caniceps (Gray-bellied squirrel)).